The sequence spans 71 residues: Large ribosomal subunit protein uL29 (71 aa).

It belongs to the universal ribosomal protein uL29 family.

In Rickettsia typhi (strain ATCC VR-144 / Wilmington), this protein is Large ribosomal subunit protein uL29.